A 207-amino-acid polypeptide reads, in one-letter code: 3-demethoxyubiquinol 3-hydroxylase (207 aa).

The Fe cation site is built by E56, E86, H89, E138, E170, and H173.

This sequence belongs to the COQ7 family. Fe cation serves as cofactor.

Its subcellular location is the cell membrane. It catalyses the reaction a 5-methoxy-2-methyl-3-(all-trans-polyprenyl)benzene-1,4-diol + AH2 + O2 = a 3-demethylubiquinol + A + H2O. The protein operates within cofactor biosynthesis; ubiquinone biosynthesis. Catalyzes the hydroxylation of 2-nonaprenyl-3-methyl-6-methoxy-1,4-benzoquinol during ubiquinone biosynthesis. In Cupriavidus taiwanensis (strain DSM 17343 / BCRC 17206 / CCUG 44338 / CIP 107171 / LMG 19424 / R1) (Ralstonia taiwanensis (strain LMG 19424)), this protein is 3-demethoxyubiquinol 3-hydroxylase.